The following is a 101-amino-acid chain: Urease subunit beta (101 aa).

This sequence belongs to the urease beta subunit family. As to quaternary structure, heterotrimer of UreA (gamma), UreB (beta) and UreC (alpha) subunits. Three heterotrimers associate to form the active enzyme.

It is found in the cytoplasm. The enzyme catalyses urea + 2 H2O + H(+) = hydrogencarbonate + 2 NH4(+). It functions in the pathway nitrogen metabolism; urea degradation; CO(2) and NH(3) from urea (urease route): step 1/1. The protein is Urease subunit beta of Thermosynechococcus vestitus (strain NIES-2133 / IAM M-273 / BP-1).